Reading from the N-terminus, the 935-residue chain is Probable mediator of RNA polymerase II transcription subunit 15c (935 aa).

The segment covering 1 to 13 (MEGNTNWKPNEQG) has biased composition (polar residues). Disordered stretches follow at residues 1-28 (MEGN…WRSQ), 170-190 (NLPT…VSSS), 495-526 (SSVQ…HQMQ), 548-611 (QQVS…PVPG), and 635-654 (SSSK…PPEP). Low complexity predominate over residues 511–526 (MQQQQPQQGNHQHQMQ). Composition is skewed to polar residues over residues 548 to 577 (QQVS…SPQL) and 635 to 644 (SSSKLGTQET).

Belongs to the plant Mediator complex subunit 15 family. In terms of assembly, component of the Mediator complex.

The protein localises to the nucleus. Functionally, component of the Mediator complex, a coactivator involved in the regulated transcription of nearly all RNA polymerase II-dependent genes. Mediator functions as a bridge to convey information from gene-specific regulatory proteins to the basal RNA polymerase II transcription machinery. The Mediator complex, having a compact conformation in its free form, is recruited to promoters by direct interactions with regulatory proteins and serves for the assembly of a functional preinitiation complex with RNA polymerase II and the general transcription factors. This chain is Probable mediator of RNA polymerase II transcription subunit 15c (MED15C), found in Arabidopsis thaliana (Mouse-ear cress).